A 1644-amino-acid chain; its full sequence is Terminal uridylyltransferase 4 (1644 aa).

Disordered regions lie at residues 30–60 (SNQT…KQND) and 75–277 (AASV…EMDY). S102 is subject to Phosphoserine. Over residues 108-123 (KGSSQTKLEKTPSLQT) the composition is skewed to polar residues. The residue at position 131 (S131) is a Phosphoserine. Composition is skewed to polar residues over residues 146–156 (AEATTEKALNS) and 163–174 (TPTSQMKLQKTP). S176 carries the post-translational modification Phosphoserine. Polar residues-rich tracts occupy residues 194-209 (QTES…SSFV) and 226-242 (LENS…TDNI). Over residues 258 to 272 (DLSKMKSEESNKENS) the composition is skewed to basic and acidic residues. Positions 273–353 (SEMDYLENAT…KEKRHKKNIL (81 aa)) are required for interaction with LIN28A and pre-let-7 RNA. Residues C326, C329, H342, and H348 each contribute to the Zn(2+) site. Basic and acidic residues predominate over residues 603 to 623 (IADENKAKADEPKDDTKKTET). A disordered region spans residues 603 to 640 (IADENKAKADEPKDDTKKTETDNQSNAAKAKHGKSPLT). One can recognise a PAP-associated 1 domain in the interval 649 to 698 (LGQLWLELLKFYTLDFALEEYVICVRIQDILTRENKNWPKRRIAIEDPFS). Disordered stretches follow at residues 733–759 (KGGN…VKSD) and 812–841 (HGQD…DLTP). Residues 745–755 (KEKGKLSSKKP) show a composition bias toward basic residues. Residues 815–827 (DSSSLSTASGGSD) show a composition bias toward low complexity. Basic and acidic residues predominate over residues 828 to 837 (LKQKSAEKQG). The interval 918–1634 (DKFILTSGKP…CATRRCRERC (717 aa)) is sufficient for monouridylation activity. Residues 930 to 947 (IVCSICKKDGHSKNDCPE) form a CCHC-type 1 zinc finger. UTP-binding positions include 1015-1018 (SSKN), 1025-1028 (SDLD), N1098, K1120, 1138-1142 (SYAYI), and H1254. Mg(2+) contacts are provided by D1026 and D1028. A PAP-associated 2 domain is found at 1201–1254 (SLGELWLGLLRFYTEEFDFKEYVISIRQKKLLTTFEKQWTSKCIAIEDPFDLNH). The CCHC-type 2 zinc finger occupies 1310-1327 (RCCRVCGKIGHYMKDCPK). Residues 1329–1350 (KRLKKKDSEEEKEGNEEEKDSR) are disordered. Residues 1358–1375 (LRCFICGDAGHVRRECPE) form a CCHC-type 3 zinc finger. A compositionally biased stretch (low complexity) spans 1402–1427 (AGSAQQQSDQSIRTRQSSECSDSPSY). Positions 1402–1483 (AGSAQQQSDQ…LYNFPQSPPA (82 aa)) are disordered. The segment covering 1428–1450 (SPQPQPFPQNSPQPSALPPPPSQ) has biased composition (pro residues). Residues 1451–1473 (PGSQPKLGPPQQGGQPPHQVQMP) show a composition bias toward low complexity. An Omega-N-methylarginine modification is found at R1624.

The protein belongs to the DNA polymerase type-B-like family. Interacts with LIN28A in the presence of pre-let-7 RNA. Interacts with T2BP. Interacts with MOV10; the interaction is RNA-dependent. Mg(2+) serves as cofactor. It depends on Mn(2+) as a cofactor. In terms of tissue distribution, ubiquitously expressed.

The protein localises to the nucleus. The protein resides in the cytoplasm. It is found in the cytoplasmic ribonucleoprotein granule. It catalyses the reaction RNA(n) + UTP = RNA(n)-3'-uridine ribonucleotide + diphosphate. In terms of biological role, uridylyltransferase that mediates the terminal uridylation of mRNAs with short (less than 25 nucleotides) poly(A) tails, hence facilitating global mRNA decay. Essential for both oocyte maturation and fertility. Through 3' terminal uridylation of mRNA, sculpts, with TUT7, the maternal transcriptome by eliminating transcripts during oocyte growth. Involved in microRNA (miRNA)-induced gene silencing through uridylation of deadenylated miRNA targets. Also functions as an integral regulator of microRNA biogenesiS using 3 different uridylation mechanisms. Acts as a suppressor of miRNA biogenesis by mediating the terminal uridylation of some miRNA precursors, including that of let-7 (pre-let-7), miR107, miR-143 and miR-200c. Uridylated miRNAs are not processed by Dicer and undergo degradation. Degradation of pre-let-7 contributes to the maintenance of embryonic stem (ES) cell pluripotency. Also catalyzes the 3' uridylation of miR-26A, a miRNA that targets IL6 transcript. This abrogates the silencing of IL6 transcript, hence promoting cytokine expression. In the absence of LIN28A, TUT7 and TUT4 monouridylate group II pre-miRNAs, which includes most of pre-let7 members, that shapes an optimal 3' end overhang for efficient processing. Add oligo-U tails to truncated pre-miRNAS with a 5' overhang which may promote rapid degradation of non-functional pre-miRNA species. May also suppress Toll-like receptor-induced NF-kappa-B activation via binding to T2BP. Does not play a role in replication-dependent histone mRNA degradation. Due to functional redundancy between TUT4 and TUT7, the identification of the specific role of each of these proteins is difficult. TUT4 and TUT7 restrict retrotransposition of long interspersed element-1 (LINE-1) in cooperation with MOV10 counteracting the RNA chaperonne activity of L1RE1. TUT7 uridylates LINE-1 mRNAs in the cytoplasm which inhibits initiation of reverse transcription once in the nucleus, whereas uridylation by TUT4 destabilizes mRNAs in cytoplasmic ribonucleoprotein granules. This Mus musculus (Mouse) protein is Terminal uridylyltransferase 4.